Consider the following 356-residue polypeptide: Solute carrier family 25 member 3 (356 aa).

A mitochondrion-targeting transit peptide spans 1 to 44 (MFSSVAHLARANPFNAPHLQLVHDVSGPRSPPGPPRRSRHLAAA). The Mitochondrial intermembrane segment spans residues 45–57 (AVEGYSCEFGSMK). 3 Solcar repeats span residues 57-141 (KYYA…FKAL), 154-238 (WRTS…TVEA), and 255-333 (EQLV…VKVY). A helical membrane pass occupies residues 58 to 80 (YYALCGFGGVLSCGLTHTAVVPL). Residues 81 to 115 (DLVKCRMQVDPQKYKGIFNGFSITLKEDGVRGLAK) are Mitochondrial matrix-facing. Position 93 is an N6-acetyllysine (Lys93). Lys106 carries the post-translational modification N6-methyllysine. A helical membrane pass occupies residues 116 to 135 (GWAPTLIGYSMQGLCKFGFY). Over 136–155 (EVFKALYSNILGEENTYLWR) the chain is Mitochondrial intermembrane. Residues 156-177 (TSLYLAASASAEFFADIALAPM) traverse the membrane as a helical segment. Residues 178–212 (EAAKVRIQTQPGYANTLREAVPKMYKEEGLNAFYK) lie on the Mitochondrial matrix side of the membrane. Tyr190 carries the phosphotyrosine modification. Lys203 carries the post-translational modification N6-acetyllysine. The chain crosses the membrane as a helical span at residues 213 to 232 (GVAPVWMRQIPYTMMKFACF). At 233–255 (ERTVEALYKFVVPKPRSECTKAE) the chain is on the mitochondrial intermembrane side. Residues 256–278 (QLVVTFVAGYIAGVFCAIVSHPA) traverse the membrane as a helical segment. The Mitochondrial matrix portion of the chain corresponds to 279–308 (DSVVSVLNKEKGSTASQVLQRLGFRGVWKG). The chain crosses the membrane as a helical span at residues 309–327 (LFARIIMIGTLTALQWFIY). At 328–356 (DSVKVYFRLPRPPPPEMPESLKKKLGLTE) the chain is on the mitochondrial intermembrane side.

This sequence belongs to the mitochondrial carrier (TC 2.A.29) family. Interacts with PPIF; the interaction is impaired by CsA.

The protein resides in the mitochondrion inner membrane. The catalysed reaction is phosphate(in) + H(+)(in) = phosphate(out) + H(+)(out). In terms of biological role, inorganic ion transporter that transports phosphate or copper ions across the mitochondrial inner membrane into the matrix compartment. Mediates proton-coupled symport of phosphate ions necessary for mitochondrial oxidative phosphorylation of ADP to ATP. Transports copper ions probably in the form of anionic copper(I) complexes to maintain mitochondrial matrix copper pool and to supply copper for cytochrome C oxidase complex assembly. May also play a role in regulation of the mitochondrial permeability transition pore (mPTP). This chain is Solute carrier family 25 member 3, found in Rattus norvegicus (Rat).